Reading from the N-terminus, the 419-residue chain is BTB/POZ domain-containing protein KCTD20 (419 aa).

Residues 117–191 (EKVTLLVDGT…YKTGIINCPD (75 aa)) form the BTB domain.

In terms of assembly, interacts with AKT1; AKT2 and AKT3. Associates with PP2CA. Part of a complex containing MARK4.

It is found in the cytoplasm. Promotes the phosphorylation of AKT family members. In Homo sapiens (Human), this protein is BTB/POZ domain-containing protein KCTD20 (KCTD20).